A 311-amino-acid polypeptide reads, in one-letter code: uncharacterized protein (311 aa).

This is an uncharacterized protein from Sinorhizobium fredii (strain NBRC 101917 / NGR234).